The primary structure comprises 240 residues: Glutathione-independent glyoxalase hsp3102 (240 aa).

Residues C141, H142, and E175 contribute to the active site.

This sequence belongs to the peptidase C56 family. HSP31-like subfamily.

The protein localises to the cytoplasm. It is found in the nucleus. It catalyses the reaction methylglyoxal + H2O = (R)-lactate + H(+). Catalyzes the conversion of methylglyoxal (MG) to D-lactate in a single glutathione (GSH)-independent step. May play a role in detoxifying endogenously produced glyoxals. Involved in protection against reactive oxygen species (ROS). The polypeptide is Glutathione-independent glyoxalase hsp3102 (Schizosaccharomyces pombe (strain 972 / ATCC 24843) (Fission yeast)).